The sequence spans 114 residues: UPF0342 protein LSL_0473 (114 aa).

The protein belongs to the UPF0342 family.

In Ligilactobacillus salivarius (strain UCC118) (Lactobacillus salivarius), this protein is UPF0342 protein LSL_0473.